Here is a 302-residue protein sequence, read N- to C-terminus: Probable histone acetyltransferase Rv0428c (302 aa).

The enzyme catalyses L-lysyl-[histone] + acetyl-CoA = N(6)-acetyl-L-lysyl-[histone] + CoA + H(+). Functionally, shows histone acetyl transferase (HAT) activity with recombinant eukaryotic H3 histone expressed in bacteria as substrate and acetyl-CoA as donor. May be involved in survival under stress conditions. The polypeptide is Probable histone acetyltransferase Rv0428c (Mycobacterium tuberculosis (strain ATCC 25618 / H37Rv)).